Here is a 396-residue protein sequence, read N- to C-terminus: Dimethyladenosine transferase 2, mitochondrial (396 aa).

The N-terminal 43 residues, 1–43 (MRGPAMRLPPRIALSALARGPSCILGSGAATRKDWQTRNRRGF), are a transit peptide targeting the mitochondrion. The segment at 43-71 (FSDFNIEPLPDSDLEESSPWTSRNRSEPT) is disordered. 3 residues coordinate S-adenosyl-L-methionine: Ile-74, Glu-123, and Asp-149. The segment at 328–329 (KR) is DNA-binding.

Belongs to the class I-like SAM-binding methyltransferase superfamily. rRNA adenine N(6)-methyltransferase family. KsgA subfamily. Homodimer. Component of the mitochondrial transcription initiation complex, composed at least of TFB2M, TFAM and POLRMT. In this complex TFAM recruits POLRMT to the promoter whereas TFB2M induces structural changes in POLRMT to enable promoter opening and trapping of the DNA non-template strand. Interacts with mitochondrial RNA polymerase POLRMT. Interacts with TFAM. Ubiquitously expressed.

It localises to the mitochondrion. It catalyses the reaction adenosine in rRNA + S-adenosyl-L-methionine = N(6)-methyladenosine in rRNA + S-adenosyl-L-homocysteine + H(+). S-adenosyl-L-methionine-dependent rRNA methyltransferase which may methylate two specific adjacent adenosines in the loop of a conserved hairpin near the 3'-end of 12S mitochondrial rRNA. Component of the mitochondrial transcription initiation complex, composed at least of TFB2M, TFAM and POLRMT that is required for basal transcription of mitochondrial DNA. In this complex, TFAM recruits POLRMT to a specific promoter whereas TFB2M induces structural changes in POLRMT to enable promoter opening and trapping of the DNA non-template strand. Stimulates transcription independently of the methyltransferase activity. This is Dimethyladenosine transferase 2, mitochondrial from Mus musculus (Mouse).